The sequence spans 1187 residues: Nucleolar protein 6 (1187 aa).

The segment covering 1 to 20 (MGRIKENQSKKKTLLRDSKA) has biased composition (basic and acidic residues). Disordered regions lie at residues 1-64 (MGRI…FKHP) and 1134-1187 (REQR…SALC).

This sequence belongs to the NRAP family. In terms of assembly, part of the small subunit (SSU) processome, composed of more than 70 proteins and the RNA chaperone small nucleolar RNA (snoRNA) U3.

The protein resides in the nucleus. Its subcellular location is the nucleolus. It localises to the chromosome. Its function is as follows. Part of the small subunit (SSU) processome, first precursor of the small eukaryotic ribosomal subunit. During the assembly of the SSU processome in the nucleolus, many ribosome biogenesis factors, an RNA chaperone and ribosomal proteins associate with the nascent pre-rRNA and work in concert to generate RNA folding, modifications, rearrangements and cleavage as well as targeted degradation of pre-ribosomal RNA by the RNA exosome. The polypeptide is Nucleolar protein 6 (Drosophila mojavensis (Fruit fly)).